The chain runs to 60 residues: UPF0291 protein CTC_01690.1 (60 aa).

This sequence belongs to the UPF0291 family.

Its subcellular location is the cytoplasm. The sequence is that of UPF0291 protein CTC_01690.1 from Clostridium tetani (strain Massachusetts / E88).